A 564-amino-acid chain; its full sequence is 5-aminolevulinate synthase, mitochondrial (564 aa).

The transit peptide at 1–57 directs the protein to the mitochondrion; sequence MESITKVSMSVCPFVRSTSTQALRQLSQTSGALANQARQCPIAGNAIRAKEISIRSY. Residues arginine 113, serine 226, and lysine 245 each contribute to the substrate site. Pyridoxal 5'-phosphate is bound by residues serine 278, histidine 306, and threonine 350. Lysine 353 is an active-site residue. Lysine 353 is modified (N6-(pyridoxal phosphate)lysine). 2 residues coordinate pyridoxal 5'-phosphate: threonine 382 and threonine 383. Threonine 468 contacts substrate.

It belongs to the class-II pyridoxal-phosphate-dependent aminotransferase family. Homodimer. It depends on pyridoxal 5'-phosphate as a cofactor.

Its subcellular location is the mitochondrion matrix. The catalysed reaction is succinyl-CoA + glycine + H(+) = 5-aminolevulinate + CO2 + CoA. The protein operates within porphyrin-containing compound metabolism; protoporphyrin-IX biosynthesis; 5-aminolevulinate from glycine: step 1/1. Catalyzes the synthesis of 5-aminolevulinate (ALA) from succinyl-CoA and glycine, the first and rate-limiting step in heme biosynthesis. This is 5-aminolevulinate synthase, mitochondrial (HEM1) from Candida albicans (strain SC5314 / ATCC MYA-2876) (Yeast).